A 257-amino-acid chain; its full sequence is Acetylglutamate kinase (257 aa).

Substrate is bound by residues 41 to 42 (GG), Arg63, and Asn158.

It belongs to the acetylglutamate kinase family. ArgB subfamily.

It is found in the cytoplasm. It carries out the reaction N-acetyl-L-glutamate + ATP = N-acetyl-L-glutamyl 5-phosphate + ADP. Its pathway is amino-acid biosynthesis; L-arginine biosynthesis; N(2)-acetyl-L-ornithine from L-glutamate: step 2/4. Catalyzes the ATP-dependent phosphorylation of N-acetyl-L-glutamate. The protein is Acetylglutamate kinase of Phocaeicola vulgatus (strain ATCC 8482 / DSM 1447 / JCM 5826 / CCUG 4940 / NBRC 14291 / NCTC 11154) (Bacteroides vulgatus).